The sequence spans 391 residues: Argininosuccinate synthase (391 aa).

6-14 (AYSGGLDTT) provides a ligand contact to ATP. Residue tyrosine 84 coordinates L-citrulline. Glycine 114 lines the ATP pocket. L-aspartate contacts are provided by threonine 116, asparagine 120, and aspartate 121. Residue asparagine 120 participates in L-citrulline binding. L-citrulline-binding residues include arginine 124, serine 171, serine 180, glutamate 253, and tyrosine 265.

It belongs to the argininosuccinate synthase family. Type 1 subfamily. As to quaternary structure, homotetramer.

It localises to the cytoplasm. It catalyses the reaction L-citrulline + L-aspartate + ATP = 2-(N(omega)-L-arginino)succinate + AMP + diphosphate + H(+). The protein operates within amino-acid biosynthesis; L-arginine biosynthesis; L-arginine from L-ornithine and carbamoyl phosphate: step 2/3. This Saccharolobus solfataricus (strain ATCC 35092 / DSM 1617 / JCM 11322 / P2) (Sulfolobus solfataricus) protein is Argininosuccinate synthase.